We begin with the raw amino-acid sequence, 453 residues long: Homogentisate 1,2-dioxygenase (453 aa).

Residues 1 to 42 (MLEKAEKQRRAGSGQQRAAGYMPGFGNDFETESLPGALPQGQ) are disordered. H306 functions as the Proton acceptor in the catalytic mechanism. Fe cation contacts are provided by H349 and E355. Residues Y364 and H385 each contribute to the homogentisate site. H385 provides a ligand contact to Fe cation.

This sequence belongs to the homogentisate dioxygenase family. As to quaternary structure, hexamer; dimer of trimers. Fe cation is required as a cofactor.

It catalyses the reaction homogentisate + O2 = 4-maleylacetoacetate + H(+). It functions in the pathway amino-acid degradation; L-phenylalanine degradation; acetoacetate and fumarate from L-phenylalanine: step 4/6. Involved in the catabolism of homogentisate (2,5-dihydroxyphenylacetate or 2,5-OH-PhAc), a central intermediate in the degradation of phenylalanine and tyrosine. Catalyzes the oxidative ring cleavage of the aromatic ring of homogentisate to yield maleylacetoacetate. The polypeptide is Homogentisate 1,2-dioxygenase (Rhizobium meliloti (strain 1021) (Ensifer meliloti)).